Consider the following 395-residue polypeptide: MKRFLLCSFALVLLYPAGIDMYLVGLPRIAADLNASEAQLHIAFSVYLAGMATAMLFAGKIADQSGRKPVAIVGALVFMMASLLCSRASEGSLFLSGRFLQGVGAGGCYVVAFAILRDTLDEHRRAKVLSLLNGITCIVPVLAPVVGHLIMLRFPWQSLFYTMSAMGIIVGLLSLFILRETRPARLAPRDLSRSSPAAESLVNRFFVSRLAITTLSVSVILTFVNASPVLLMEVMGFSRGDYAITMALTAGVSMVVSFSTPFALGLFKPRTLMLVSQGLFLTAGVTLSLAHTNTVTLFGLTLICAGFSVGFGVAMSQALGPFSLRAGVASSTLGIAQVCGSSLWIWLAAILGISAMNMLIGILIGCSIVSILLIFSVTPNRSVAEHEEIPYQSRP.

12 helical membrane passes run phenylalanine 4–valine 24, isoleucine 42–alanine 62, proline 69–serine 89, leucine 93–phenylalanine 113, leucine 131–methionine 151, serine 158–leucine 178, valine 217–phenylalanine 237, alanine 247–phenylalanine 267, threonine 271–histidine 291, valine 295–methionine 315, valine 328–isoleucine 350, and alanine 355–valine 377.

It belongs to the major facilitator superfamily. DHA1 family. MdtL (TC 2.A.1.2.22) subfamily.

It is found in the cell inner membrane. This chain is Multidrug resistance protein MdtL, found in Salmonella newport (strain SL254).